Consider the following 245-residue polypeptide: DNA repair protein RecO (245 aa).

The protein belongs to the RecO family.

Involved in DNA repair and RecF pathway recombination. This Klebsiella pneumoniae (strain 342) protein is DNA repair protein RecO.